A 459-amino-acid chain; its full sequence is Ribulose bisphosphate carboxylase (459 aa).

Asparagine 111 is a binding site for substrate. The Proton acceptor role is filled by lysine 166. Lysine 168 contacts substrate. Mg(2+)-binding residues include lysine 191, aspartate 193, and glutamate 194. Lysine 191 carries the N6-carboxylysine modification. The Proton acceptor role is filled by histidine 287. Residues arginine 288, histidine 321, and serine 368 each contribute to the substrate site.

This sequence belongs to the RuBisCO large chain family. Type II subfamily. In terms of assembly, homodimer. The cofactor is Mg(2+).

It carries out the reaction 2 (2R)-3-phosphoglycerate + 2 H(+) = D-ribulose 1,5-bisphosphate + CO2 + H2O. The enzyme catalyses D-ribulose 1,5-bisphosphate + O2 = 2-phosphoglycolate + (2R)-3-phosphoglycerate + 2 H(+). RuBisCO catalyzes two reactions: the carboxylation of D-ribulose 1,5-bisphosphate, the primary event in carbon dioxide fixation, as well as the oxidative fragmentation of the pentose substrate. Both reactions occur simultaneously and in competition at the same active site. The polypeptide is Ribulose bisphosphate carboxylase (Dechloromonas aromatica (strain RCB)).